The primary structure comprises 363 residues: Peptide chain release factor 2 (363 aa).

Glutamine 251 carries the post-translational modification N5-methylglutamine.

Belongs to the prokaryotic/mitochondrial release factor family. Post-translationally, methylated by PrmC. Methylation increases the termination efficiency of RF2.

It is found in the cytoplasm. In terms of biological role, peptide chain release factor 2 directs the termination of translation in response to the peptide chain termination codons UGA and UAA. In Helicobacter pylori (strain G27), this protein is Peptide chain release factor 2.